Here is a 515-residue protein sequence, read N- to C-terminus: 2-isopropylmalate synthase (515 aa).

Residues 5 to 267 enclose the Pyruvate carboxyltransferase domain; that stretch reads VIIFDTTLRD…DTHINTQEIH (263 aa). Residues Asp-14, His-202, His-204, and Asn-238 each contribute to the Mn(2+) site. The segment at 392–515 is regulatory domain; that stretch reads VLDKLSAHST…VADIKNHKHH (124 aa).

The protein belongs to the alpha-IPM synthase/homocitrate synthase family. LeuA type 1 subfamily. In terms of assembly, homodimer. The cofactor is Mn(2+).

It is found in the cytoplasm. It carries out the reaction 3-methyl-2-oxobutanoate + acetyl-CoA + H2O = (2S)-2-isopropylmalate + CoA + H(+). It functions in the pathway amino-acid biosynthesis; L-leucine biosynthesis; L-leucine from 3-methyl-2-oxobutanoate: step 1/4. Catalyzes the condensation of the acetyl group of acetyl-CoA with 3-methyl-2-oxobutanoate (2-ketoisovalerate) to form 3-carboxy-3-hydroxy-4-methylpentanoate (2-isopropylmalate). The chain is 2-isopropylmalate synthase from Haemophilus influenzae (strain ATCC 51907 / DSM 11121 / KW20 / Rd).